The primary structure comprises 348 residues: Phospho-2-dehydro-3-deoxyheptonate aldolase, Trp-sensitive (348 aa).

The protein belongs to the class-I DAHP synthase family.

It carries out the reaction D-erythrose 4-phosphate + phosphoenolpyruvate + H2O = 7-phospho-2-dehydro-3-deoxy-D-arabino-heptonate + phosphate. It participates in metabolic intermediate biosynthesis; chorismate biosynthesis; chorismate from D-erythrose 4-phosphate and phosphoenolpyruvate: step 1/7. Functionally, stereospecific condensation of phosphoenolpyruvate (PEP) and D-erythrose-4-phosphate (E4P) giving rise to 3-deoxy-D-arabino-heptulosonate-7-phosphate (DAHP). In Buchnera aphidicola subsp. Acyrthosiphon pisum (strain APS) (Acyrthosiphon pisum symbiotic bacterium), this protein is Phospho-2-dehydro-3-deoxyheptonate aldolase, Trp-sensitive (aroH).